Consider the following 183-residue polypeptide: NEDD8-conjugating enzyme Ubc12 (183 aa).

Met1 is modified (N-acetylmethionine). The segment at 1 to 29 (MIKLFSLKQQKKEEESAGGTKGSSKKASA) is disordered. Residues 1-57 (MIKLFSLKQQKKEEESAGGTKGSSKKASAAQLRIQKDINELNLPKTCDISFSDPDDL) are interaction with UBA3. Lys3 is subject to N6-acetyllysine. The 145-residue stretch at 29–173 (AAQLRIQKDI…VQRSMRGGYI (145 aa)) folds into the UBC core domain. The residue at position 50 (Ser50) is a Phosphoserine. Catalysis depends on Cys111, which acts as the Glycyl thioester intermediate. Arg169 is modified (asymmetric dimethylarginine; alternate). Omega-N-methylarginine; alternate is present on Arg169.

It belongs to the ubiquitin-conjugating enzyme family. UBC12 subfamily. As to quaternary structure, interacts with UBA3 and RBX1. Interacts (N-terminally acetylated form) with (via DCUN1 domain) DCUN1D1, DCUN1D2, DCUN1D3, DCUN1D4 and DCUN1D5. The acetylation of Met-1 increases affinity for DCUN1D1 by about 2 orders of magnitude and is crucial for NEDD8 transfer to cullins.

The catalysed reaction is [E1 NEDD8-activating enzyme]-S-[NEDD8 protein]-yl-L-cysteine + [E2 NEDD8-conjugating enzyme]-L-cysteine = [E1 NEDD8-activating enzyme]-L-cysteine + [E2 NEDD8-conjugating enzyme]-S-[NEDD8-protein]-yl-L-cysteine.. Its pathway is protein modification; protein neddylation. Accepts the ubiquitin-like protein NEDD8 from the UBA3-NAE1 E1 complex and catalyzes its covalent attachment to other proteins. The specific interaction with the E3 ubiquitin ligase RBX1, but not RBX2, suggests that the RBX1-UBE2M complex neddylates specific target proteins, such as CUL1, CUL2, CUL3 and CUL4. Involved in cell proliferation. This is NEDD8-conjugating enzyme Ubc12 (Ube2m) from Mus musculus (Mouse).